The chain runs to 88 residues: Small ribosomal subunit protein bS16c (88 aa).

It belongs to the bacterial ribosomal protein bS16 family.

It localises to the plastid. The protein localises to the chloroplast. The polypeptide is Small ribosomal subunit protein bS16c (Coffea arabica (Arabian coffee)).